The sequence spans 154 residues: Nascent polypeptide-associated complex subunit beta (154 aa).

The NAC-A/B domain maps to 33–98 (EQDDTKLIEA…PQEKNVTQLI (66 aa)). The tract at residues 125 to 154 (APTELNAGAPAGGDEGIPDLIDGEKFDEVE) is disordered.

Belongs to the NAC-beta family. Part of the nascent polypeptide-associated complex (NAC), consisting of EGD2 and EGD1. NAC associates with ribosomes via EGD1.

It is found in the cytoplasm. The protein localises to the nucleus. Component of the nascent polypeptide-associated complex (NAC), a dynamic component of the ribosomal exit tunnel, protecting the emerging polypeptides from interaction with other cytoplasmic proteins to ensure appropriate nascent protein targeting. The NAC complex also promotes mitochondrial protein import by enhancing productive ribosome interactions with the outer mitochondrial membrane and blocks the inappropriate interaction of ribosomes translating non-secretory nascent polypeptides with translocation sites in the membrane of the endoplasmic reticulum. EGD1 may act as a transcription factor that exert a negative effect on the expression of several genes that are transcribed by RNA polymerase II. This chain is Nascent polypeptide-associated complex subunit beta (EGD1), found in Scheffersomyces stipitis (strain ATCC 58785 / CBS 6054 / NBRC 10063 / NRRL Y-11545) (Yeast).